The primary structure comprises 404 residues: Cysteine desulfurase IscS (404 aa).

Pyridoxal 5'-phosphate contacts are provided by residues 75-76 (AT), Asn155, Gln183, and 203-205 (SGH). Lys206 is modified (N6-(pyridoxal phosphate)lysine). Thr243 contributes to the pyridoxal 5'-phosphate binding site. Catalysis depends on Cys328, which acts as the Cysteine persulfide intermediate. Cys328 is a binding site for [2Fe-2S] cluster.

The protein belongs to the class-V pyridoxal-phosphate-dependent aminotransferase family. NifS/IscS subfamily. Homodimer. Forms a heterotetramer with IscU, interacts with other sulfur acceptors. Pyridoxal 5'-phosphate is required as a cofactor.

The protein localises to the cytoplasm. The catalysed reaction is (sulfur carrier)-H + L-cysteine = (sulfur carrier)-SH + L-alanine. It functions in the pathway cofactor biosynthesis; iron-sulfur cluster biosynthesis. Master enzyme that delivers sulfur to a number of partners involved in Fe-S cluster assembly, tRNA modification or cofactor biosynthesis. Catalyzes the removal of elemental sulfur atoms from cysteine to produce alanine. Functions as a sulfur delivery protein for Fe-S cluster synthesis onto IscU, an Fe-S scaffold assembly protein, as well as other S acceptor proteins. The sequence is that of Cysteine desulfurase IscS from Shewanella baltica (strain OS155 / ATCC BAA-1091).